A 248-amino-acid polypeptide reads, in one-letter code: Probable phosphatase VFMJ11_A0899 (248 aa).

Zn(2+) is bound by residues histidine 8, histidine 10, histidine 16, histidine 41, glutamate 74, histidine 101, histidine 131, aspartate 193, and histidine 195.

This sequence belongs to the PHP family. The cofactor is Zn(2+).

This is Probable phosphatase VFMJ11_A0899 from Aliivibrio fischeri (strain MJ11) (Vibrio fischeri).